A 384-amino-acid polypeptide reads, in one-letter code: S-adenosylmethionine synthase (384 aa).

Residue His-15 coordinates ATP. Residue Asp-17 coordinates Mg(2+). Glu-43 serves as a coordination point for K(+). Positions 56 and 99 each coordinate L-methionine. Positions 99-109 (QSADINQGVDR) are flexible loop. ATP-binding positions include 164-166 (DAK), 230-231 (RF), Asp-239, 245-246 (RK), Ala-262, and Lys-266. Asp-239 is an L-methionine binding site. Residue Lys-270 coordinates L-methionine.

This sequence belongs to the AdoMet synthase family. Homotetramer; dimer of dimers. Mg(2+) serves as cofactor. It depends on K(+) as a cofactor.

It localises to the cytoplasm. It carries out the reaction L-methionine + ATP + H2O = S-adenosyl-L-methionine + phosphate + diphosphate. The protein operates within amino-acid biosynthesis; S-adenosyl-L-methionine biosynthesis; S-adenosyl-L-methionine from L-methionine: step 1/1. Catalyzes the formation of S-adenosylmethionine (AdoMet) from methionine and ATP. The overall synthetic reaction is composed of two sequential steps, AdoMet formation and the subsequent tripolyphosphate hydrolysis which occurs prior to release of AdoMet from the enzyme. In Haemophilus influenzae (strain PittEE), this protein is S-adenosylmethionine synthase.